A 444-amino-acid polypeptide reads, in one-letter code: RAC family serine/threonine-protein kinase homolog (444 aa).

Residues 5-100 form the PH domain; it reads PIKHEGFLTK…WIEILINERE (96 aa). The Protein kinase domain maps to 120 to 374; sequence FELLNLVGKG…PNLIKRHPFF (255 aa). ATP contacts are provided by residues 126-134 and Lys149; that span reads VGKGSFGKV. Residue Asp243 is the Proton acceptor of the active site. Thr278 is subject to Phosphothreonine. Positions 375–444 constitute an AGC-kinase C-terminal domain; it reads RSIDWEQLFQ…TYVAESEHLR (70 aa).

The protein belongs to the protein kinase superfamily. AGC Ser/Thr protein kinase family. RAC subfamily.

It catalyses the reaction L-seryl-[protein] + ATP = O-phospho-L-seryl-[protein] + ADP + H(+). It carries out the reaction L-threonyl-[protein] + ATP = O-phospho-L-threonyl-[protein] + ADP + H(+). Functionally, predominantly involved during the aggregation to control cell polarity and chemotaxis. Phosphorylates talB, gefN, gefS, PI4P 5-kinase and gacQ. This Dictyostelium discoideum (Social amoeba) protein is RAC family serine/threonine-protein kinase homolog (pkbA).